The following is a 429-amino-acid chain: Serine--tRNA ligase (429 aa).

236–238 provides a ligand contact to L-serine; it reads TAE. 267–269 is an ATP binding site; sequence RSE. L-serine is bound at residue Glu290. Residue 354–357 coordinates ATP; it reads EVSS. Ser390 provides a ligand contact to L-serine.

The protein belongs to the class-II aminoacyl-tRNA synthetase family. Type-1 seryl-tRNA synthetase subfamily. As to quaternary structure, homodimer. The tRNA molecule binds across the dimer.

The protein resides in the cytoplasm. The enzyme catalyses tRNA(Ser) + L-serine + ATP = L-seryl-tRNA(Ser) + AMP + diphosphate + H(+). The catalysed reaction is tRNA(Sec) + L-serine + ATP = L-seryl-tRNA(Sec) + AMP + diphosphate + H(+). It participates in aminoacyl-tRNA biosynthesis; selenocysteinyl-tRNA(Sec) biosynthesis; L-seryl-tRNA(Sec) from L-serine and tRNA(Sec): step 1/1. Its function is as follows. Catalyzes the attachment of serine to tRNA(Ser). Is also able to aminoacylate tRNA(Sec) with serine, to form the misacylated tRNA L-seryl-tRNA(Sec), which will be further converted into selenocysteinyl-tRNA(Sec). The chain is Serine--tRNA ligase from Wigglesworthia glossinidia brevipalpis.